The sequence spans 143 residues: Transcription antitermination protein NusB (143 aa).

The protein belongs to the NusB family.

In terms of biological role, involved in transcription antitermination. Required for transcription of ribosomal RNA (rRNA) genes. Binds specifically to the boxA antiterminator sequence of the ribosomal RNA (rrn) operons. The polypeptide is Transcription antitermination protein NusB (Buchnera aphidicola subsp. Acyrthosiphon pisum (strain 5A)).